We begin with the raw amino-acid sequence, 57 residues long: MPAIQPPLYLTFLLLILLYRIITLYVWVVSTITYKTAVRHAALYQRSLFRWSFDHSL.

The Virion surface segment spans residues 1-8 (MPAIQPPL). A helical transmembrane segment spans residues 9 to 29 (YLTFLLLILLYRIITLYVWVV). Topologically, residues 30-57 (STITYKTAVRHAALYQRSLFRWSFDHSL) are intravirion.

The protein belongs to the rubulavirus small hydrophobic protein family. Interacts with host TNFRSF1A, RIPK1 and IRAK1; these interactions interfere with host NF-kappa-B activation at the level of receptor complexes. Interacts with host protein UBQLN4.

The protein localises to the virion membrane. The protein resides in the host cell membrane. In terms of biological role, plays a role in the inhibition of the host NF-kappa-B pathway. This inhibition occurs at the receptor level, by preventing the signaling of TNFR1 as well as IL-1R and TLR3. This chain is Small hydrophobic protein (SH), found in Mumps virus (strain Belfast) (MuV).